Reading from the N-terminus, the 132-residue chain is DNA-directed RNA polymerase subunit omega (132 aa).

Residues valine 100–glutamate 119 are disordered.

It belongs to the RNA polymerase subunit omega family. The RNAP catalytic core consists of 2 alpha, 1 beta, 1 beta' and 1 omega subunit. When a sigma factor is associated with the core the holoenzyme is formed, which can initiate transcription.

It carries out the reaction RNA(n) + a ribonucleoside 5'-triphosphate = RNA(n+1) + diphosphate. Promotes RNA polymerase assembly. Latches the N- and C-terminal regions of the beta' subunit thereby facilitating its interaction with the beta and alpha subunits. The polypeptide is DNA-directed RNA polymerase subunit omega (Gluconacetobacter diazotrophicus (strain ATCC 49037 / DSM 5601 / CCUG 37298 / CIP 103539 / LMG 7603 / PAl5)).